The sequence spans 37 residues: Cytochrome b6-f complex subunit 5 (37 aa).

The chain crosses the membrane as a helical span at residues 5–25 (LLSGIVLGMITVSAFGLFVAA).

This sequence belongs to the PetG family. In terms of assembly, the 4 large subunits of the cytochrome b6-f complex are cytochrome b6, subunit IV (17 kDa polypeptide, PetD), cytochrome f and the Rieske protein, while the 4 small subunits are PetG, PetL, PetM and PetN. The complex functions as a dimer.

It is found in the plastid. The protein resides in the chloroplast thylakoid membrane. In terms of biological role, component of the cytochrome b6-f complex, which mediates electron transfer between photosystem II (PSII) and photosystem I (PSI), cyclic electron flow around PSI, and state transitions. PetG is required for either the stability or assembly of the cytochrome b6-f complex. The sequence is that of Cytochrome b6-f complex subunit 5 from Thalassiosira pseudonana (Marine diatom).